The following is a 318-amino-acid chain: HPr kinase/phosphorylase (318 aa).

Catalysis depends on residues H141 and K162. Residue 156–163 (GDSAMGKS) participates in ATP binding. Residue S163 coordinates Mg(2+). The Proton acceptor; for phosphorylation activity. Proton donor; for dephosphorylation activity role is filled by D180. The interval 204-213 (LEVRGLGILN) is important for the catalytic mechanism of both phosphorylation and dephosphorylation. E205 lines the Mg(2+) pocket. R248 is an active-site residue. The important for the catalytic mechanism of dephosphorylation stretch occupies residues 269–274 (PVAAGR).

It belongs to the HPrK/P family. In terms of assembly, homohexamer. The cofactor is Mg(2+).

It catalyses the reaction [HPr protein]-L-serine + ATP = [HPr protein]-O-phospho-L-serine + ADP + H(+). The catalysed reaction is [HPr protein]-O-phospho-L-serine + phosphate + H(+) = [HPr protein]-L-serine + diphosphate. Catalyzes the ATP- as well as the pyrophosphate-dependent phosphorylation of a specific serine residue in HPr, a phosphocarrier protein of the phosphoenolpyruvate-dependent sugar phosphotransferase system (PTS). HprK/P also catalyzes the pyrophosphate-producing, inorganic phosphate-dependent dephosphorylation (phosphorolysis) of seryl-phosphorylated HPr (P-Ser-HPr). This is HPr kinase/phosphorylase from Chromobacterium violaceum (strain ATCC 12472 / DSM 30191 / JCM 1249 / CCUG 213 / NBRC 12614 / NCIMB 9131 / NCTC 9757 / MK).